We begin with the raw amino-acid sequence, 230 residues long: TorCAD operon transcriptional regulatory protein TorR (230 aa).

The Response regulatory domain maps to 4–117 (HIVIVEDEPV…ELVVRVKNLL (114 aa)). Aspartate 53 is modified (4-aspartylphosphate). The segment at residues 132–227 (DNCYRFAGYC…QHGEGYFLAA (96 aa)) is a DNA-binding region (ompR/PhoB-type).

Post-translationally, phosphorylated and dephosphorylated by TorS.

Its subcellular location is the cytoplasm. In terms of biological role, member of the two-component regulatory system TorS/TorR involved in the anaerobic utilization of trimethylamine-N-oxide (TMAO). Phosphorylated TorR activates the transcription of the torCAD operon by binding to four decameric boxes located in the torCAD promoter. Box1, 2 and 4 contain the DNA sequence 5'-CTGTTCATAT-3' and box3 contains the DNA sequence 5'-CCGTTCATCC-3'. Phosphorylated as well as unphosphorylated TorR negatively regulates its own expression by binding to box1 and 2. This Escherichia coli O157:H7 protein is TorCAD operon transcriptional regulatory protein TorR (torR).